Here is a 164-residue protein sequence, read N- to C-terminus: MNPRRKQRLAVVGIIGFLIVSAVGLMLYALNDSIDLFYTPSEIIEGKNGQKPQIGQRLRIGGMVVPGSVSRDSESLAVSFDLIDTGPTVTVTYTGILPDLFREGQGIVATGVLTDVGAIKAQEVLAKHDEEYMPPELAEKMKGIKHVKPENMPTYESSNGAGSK.

Topologically, residues 1-8 (MNPRRKQR) are cytoplasmic. Residues 9–29 (LAVVGIIGFLIVSAVGLMLYA) traverse the membrane as a helical; Signal-anchor for type II membrane protein segment. The Periplasmic portion of the chain corresponds to 30–164 (LNDSIDLFYT…YESSNGAGSK (135 aa)). Histidine 128 and tyrosine 132 together coordinate heme. Residues 142–164 (KGIKHVKPENMPTYESSNGAGSK) form a disordered region. Residues 154–164 (TYESSNGAGSK) are compositionally biased toward polar residues.

Belongs to the CcmE/CycJ family.

It is found in the cell inner membrane. Heme chaperone required for the biogenesis of c-type cytochromes. Transiently binds heme delivered by CcmC and transfers the heme to apo-cytochromes in a process facilitated by CcmF and CcmH. In Alteromonas mediterranea (strain DSM 17117 / CIP 110805 / LMG 28347 / Deep ecotype), this protein is Cytochrome c-type biogenesis protein CcmE.